Consider the following 392-residue polypeptide: Chalcone synthase B (392 aa).

The active site involves Cys-167.

This sequence belongs to the thiolase-like superfamily. Chalcone/stilbene synthases family. As to expression, expressed at low level in seedlings after illumination with UV light. No expression in flowers or tissue culture.

It carries out the reaction (E)-4-coumaroyl-CoA + 3 malonyl-CoA + 3 H(+) = 2',4,4',6'-tetrahydroxychalcone + 3 CO2 + 4 CoA. It functions in the pathway secondary metabolite biosynthesis; flavonoid biosynthesis. In terms of biological role, the primary product of this enzyme is 4,2',4',6'-tetrahydroxychalcone (also termed naringenin-chalcone or chalcone) which can under specific conditions spontaneously isomerize into naringenin. The polypeptide is Chalcone synthase B (CHSB) (Petunia hybrida (Petunia)).